The primary structure comprises 304 residues: Bifunctional protein FolD (304 aa).

Residues 176–178, isoleucine 201, and isoleucine 242 each bind NADP(+); that span reads GAS.

Belongs to the tetrahydrofolate dehydrogenase/cyclohydrolase family. In terms of assembly, homodimer.

It carries out the reaction (6R)-5,10-methylene-5,6,7,8-tetrahydrofolate + NADP(+) = (6R)-5,10-methenyltetrahydrofolate + NADPH. It catalyses the reaction (6R)-5,10-methenyltetrahydrofolate + H2O = (6R)-10-formyltetrahydrofolate + H(+). The protein operates within one-carbon metabolism; tetrahydrofolate interconversion. Catalyzes the oxidation of 5,10-methylenetetrahydrofolate to 5,10-methenyltetrahydrofolate and then the hydrolysis of 5,10-methenyltetrahydrofolate to 10-formyltetrahydrofolate. In Gluconobacter oxydans (strain 621H) (Gluconobacter suboxydans), this protein is Bifunctional protein FolD.